Here is a 621-residue protein sequence, read N- to C-terminus: Glutamyl-tRNA(Gln) amidotransferase subunit B, mitochondrial (621 aa).

Residues 1–41 (MARLPTTELRKYLLTGQFTRRGCLHLRPSPLAPPIPPLRTL) constitute a mitochondrion transit peptide. 2 disordered regions span residues 26 to 86 (LRPS…DNQT) and 106 to 136 (SKLF…APFD). Composition is skewed to low complexity over residues 38 to 57 (LRTL…QIIP) and 110 to 120 (SPASTPSSSSD).

Belongs to the GatB/GatE family. GatB subfamily. In terms of assembly, subunit of the heterotrimeric GatCAB amidotransferase (AdT) complex, composed of A, B and C subunits.

It is found in the mitochondrion. The enzyme catalyses L-glutamyl-tRNA(Gln) + L-glutamine + ATP + H2O = L-glutaminyl-tRNA(Gln) + L-glutamate + ADP + phosphate + H(+). Allows the formation of correctly charged Gln-tRNA(Gln) through the transamidation of misacylated Glu-tRNA(Gln) in the mitochondria. The reaction takes place in the presence of glutamine and ATP through an activated gamma-phospho-Glu-tRNA(Gln). This Podospora anserina (strain S / ATCC MYA-4624 / DSM 980 / FGSC 10383) (Pleurage anserina) protein is Glutamyl-tRNA(Gln) amidotransferase subunit B, mitochondrial.